The following is a 657-amino-acid chain: tRNA 5-methylaminomethyl-2-thiouridine biosynthesis bifunctional protein MnmC (657 aa).

Residues 1–233 form a tRNA (mnm(5)s(2)U34)-methyltransferase region; the sequence is MPRALEPAEP…KWQMTVASFR (233 aa). An FAD-dependent cmnm(5)s(2)U34 oxidoreductase region spans residues 257–657; that stretch reads IGAGLAGCAV…LRALRHGHTG (401 aa).

In the N-terminal section; belongs to the methyltransferase superfamily. tRNA (mnm(5)s(2)U34)-methyltransferase family. This sequence in the C-terminal section; belongs to the DAO family. Requires FAD as cofactor.

It is found in the cytoplasm. It carries out the reaction 5-aminomethyl-2-thiouridine(34) in tRNA + S-adenosyl-L-methionine = 5-methylaminomethyl-2-thiouridine(34) in tRNA + S-adenosyl-L-homocysteine + H(+). Its function is as follows. Catalyzes the last two steps in the biosynthesis of 5-methylaminomethyl-2-thiouridine (mnm(5)s(2)U) at the wobble position (U34) in tRNA. Catalyzes the FAD-dependent demodification of cmnm(5)s(2)U34 to nm(5)s(2)U34, followed by the transfer of a methyl group from S-adenosyl-L-methionine to nm(5)s(2)U34, to form mnm(5)s(2)U34. The sequence is that of tRNA 5-methylaminomethyl-2-thiouridine biosynthesis bifunctional protein MnmC from Cupriavidus necator (strain ATCC 17699 / DSM 428 / KCTC 22496 / NCIMB 10442 / H16 / Stanier 337) (Ralstonia eutropha).